The chain runs to 876 residues: Valine--tRNA ligase (876 aa).

Positions 44-54 (PNVTGKLHLGH) match the 'HIGH' region motif. The 'KMSKS' region motif lies at 520-524 (KMSKS). K523 lines the ATP pocket. A coiled-coil region spans residues 805 to 876 (LEGLIDMDKE…VKARIEQLKA (72 aa)).

Belongs to the class-I aminoacyl-tRNA synthetase family. ValS type 1 subfamily. In terms of assembly, monomer.

The protein resides in the cytoplasm. The enzyme catalyses tRNA(Val) + L-valine + ATP = L-valyl-tRNA(Val) + AMP + diphosphate. Catalyzes the attachment of valine to tRNA(Val). As ValRS can inadvertently accommodate and process structurally similar amino acids such as threonine, to avoid such errors, it has a 'posttransfer' editing activity that hydrolyzes mischarged Thr-tRNA(Val) in a tRNA-dependent manner. In Staphylococcus carnosus (strain TM300), this protein is Valine--tRNA ligase.